The chain runs to 61 residues: Small ribosomal subunit protein uS14 (61 aa).

The Zn(2+) site is built by cysteine 24, cysteine 27, cysteine 40, and cysteine 43.

The protein belongs to the universal ribosomal protein uS14 family. Zinc-binding uS14 subfamily. In terms of assembly, part of the 30S ribosomal subunit. Contacts proteins S3 and S10. It depends on Zn(2+) as a cofactor.

Its function is as follows. Binds 16S rRNA, required for the assembly of 30S particles and may also be responsible for determining the conformation of the 16S rRNA at the A site. The polypeptide is Small ribosomal subunit protein uS14 (Spiroplasma citri).